The primary structure comprises 185 residues: Crossover junction endodeoxyribonuclease RuvC (185 aa).

Catalysis depends on residues Asp-7, Glu-68, and Asp-141. Mg(2+) contacts are provided by Asp-7, Glu-68, and Asp-141.

Belongs to the RuvC family. As to quaternary structure, homodimer which binds Holliday junction (HJ) DNA. The HJ becomes 2-fold symmetrical on binding to RuvC with unstacked arms; it has a different conformation from HJ DNA in complex with RuvA. In the full resolvosome a probable DNA-RuvA(4)-RuvB(12)-RuvC(2) complex forms which resolves the HJ. Requires Mg(2+) as cofactor.

The protein localises to the cytoplasm. It catalyses the reaction Endonucleolytic cleavage at a junction such as a reciprocal single-stranded crossover between two homologous DNA duplexes (Holliday junction).. Functionally, the RuvA-RuvB-RuvC complex processes Holliday junction (HJ) DNA during genetic recombination and DNA repair. Endonuclease that resolves HJ intermediates. Cleaves cruciform DNA by making single-stranded nicks across the HJ at symmetrical positions within the homologous arms, yielding a 5'-phosphate and a 3'-hydroxyl group; requires a central core of homology in the junction. The consensus cleavage sequence is 5'-(A/T)TT(C/G)-3'. Cleavage occurs on the 3'-side of the TT dinucleotide at the point of strand exchange. HJ branch migration catalyzed by RuvA-RuvB allows RuvC to scan DNA until it finds its consensus sequence, where it cleaves and resolves the cruciform DNA. The sequence is that of Crossover junction endodeoxyribonuclease RuvC from Mycobacterium sp. (strain MCS).